A 419-amino-acid polypeptide reads, in one-letter code: Adenylosuccinate synthetase (419 aa).

Residues 11-17 (GDEGKGK) and 39-41 (GHS) contribute to the GTP site. The active-site Proton acceptor is D12. D12 and G39 together coordinate Mg(2+). Residues 12–15 (DEGK), 37–40 (NAGH), T129, R143, N221, T236, and R296 contribute to the IMP site. The Proton donor role is filled by H40. Residue 292-298 (VSTGRKR) participates in substrate binding. GTP-binding positions include R298, 324 to 326 (KLD), and 408 to 410 (GTG).

The protein belongs to the adenylosuccinate synthetase family. Homodimer. Mg(2+) is required as a cofactor.

The protein localises to the cytoplasm. The enzyme catalyses IMP + L-aspartate + GTP = N(6)-(1,2-dicarboxyethyl)-AMP + GDP + phosphate + 2 H(+). It functions in the pathway purine metabolism; AMP biosynthesis via de novo pathway; AMP from IMP: step 1/2. Functionally, plays an important role in the de novo pathway and in the salvage pathway of purine nucleotide biosynthesis. Catalyzes the first committed step in the biosynthesis of AMP from IMP. This chain is Adenylosuccinate synthetase, found in Chaetomium globosum (strain ATCC 6205 / CBS 148.51 / DSM 1962 / NBRC 6347 / NRRL 1970) (Soil fungus).